A 246-amino-acid polypeptide reads, in one-letter code: Pyridoxine 5'-phosphate synthase (246 aa).

Residue asparagine 12 coordinates 3-amino-2-oxopropyl phosphate. 14-15 (DH) serves as a coordination point for 1-deoxy-D-xylulose 5-phosphate. Arginine 23 contributes to the 3-amino-2-oxopropyl phosphate binding site. Histidine 48 serves as the catalytic Proton acceptor. Residues arginine 50 and histidine 55 each contribute to the 1-deoxy-D-xylulose 5-phosphate site. Catalysis depends on glutamate 75, which acts as the Proton acceptor. Residue threonine 105 participates in 1-deoxy-D-xylulose 5-phosphate binding. Residue histidine 196 is the Proton donor of the active site. Residues glycine 197 and 218–219 (GH) contribute to the 3-amino-2-oxopropyl phosphate site.

Belongs to the PNP synthase family. Homooctamer; tetramer of dimers.

The protein localises to the cytoplasm. It catalyses the reaction 3-amino-2-oxopropyl phosphate + 1-deoxy-D-xylulose 5-phosphate = pyridoxine 5'-phosphate + phosphate + 2 H2O + H(+). Its pathway is cofactor biosynthesis; pyridoxine 5'-phosphate biosynthesis; pyridoxine 5'-phosphate from D-erythrose 4-phosphate: step 5/5. Catalyzes the complicated ring closure reaction between the two acyclic compounds 1-deoxy-D-xylulose-5-phosphate (DXP) and 3-amino-2-oxopropyl phosphate (1-amino-acetone-3-phosphate or AAP) to form pyridoxine 5'-phosphate (PNP) and inorganic phosphate. In Pseudomonas putida (strain GB-1), this protein is Pyridoxine 5'-phosphate synthase.